Consider the following 346-residue polypeptide: Acetyl-coenzyme A carboxylase carboxyl transferase subunit beta (346 aa).

The CoA carboxyltransferase N-terminal domain maps to 24 to 292 (LWIKCPKSGD…LPEVEPIAVA (269 aa)). Residues 300-311 (AEAEAAPDEVVE) show a composition bias toward acidic residues. The tract at residues 300–346 (AEAEAAPDEVVEVEAPAVDEIVEEKPAATKAKPRSKAKSKAAPKTDE) is disordered. The segment covering 330-340 (AKPRSKAKSKA) has biased composition (basic residues).

Belongs to the AccD/PCCB family. Acetyl-CoA carboxylase is a heterohexamer composed of biotin carboxyl carrier protein (AccB), biotin carboxylase (AccC) and two subunits each of ACCase subunit alpha (AccA) and ACCase subunit beta (AccD).

The protein resides in the cytoplasm. The catalysed reaction is N(6)-carboxybiotinyl-L-lysyl-[protein] + acetyl-CoA = N(6)-biotinyl-L-lysyl-[protein] + malonyl-CoA. It functions in the pathway lipid metabolism; malonyl-CoA biosynthesis; malonyl-CoA from acetyl-CoA: step 1/1. Its function is as follows. Component of the acetyl coenzyme A carboxylase (ACC) complex. Biotin carboxylase (BC) catalyzes the carboxylation of biotin on its carrier protein (BCCP) and then the CO(2) group is transferred by the transcarboxylase to acetyl-CoA to form malonyl-CoA. This Hirschia baltica (strain ATCC 49814 / DSM 5838 / IFAM 1418) protein is Acetyl-coenzyme A carboxylase carboxyl transferase subunit beta.